Reading from the N-terminus, the 550-residue chain is Hydroxylamine reductase (550 aa).

[2Fe-2S] cluster contacts are provided by cysteine 4, cysteine 7, cysteine 19, and cysteine 26. Histidine 249, glutamate 273, cysteine 317, cysteine 405, cysteine 433, cysteine 458, glutamate 492, and lysine 494 together coordinate hybrid [4Fe-2O-2S] cluster. Cysteine persulfide is present on cysteine 405.

This sequence belongs to the HCP family. Requires [2Fe-2S] cluster as cofactor. Hybrid [4Fe-2O-2S] cluster is required as a cofactor.

Its subcellular location is the cytoplasm. The catalysed reaction is A + NH4(+) + H2O = hydroxylamine + AH2 + H(+). Functionally, catalyzes the reduction of hydroxylamine to form NH(3) and H(2)O. This chain is Hydroxylamine reductase, found in Aeromonas salmonicida (strain A449).